The sequence spans 134 residues: UPF0412 protein YaaI (134 aa).

An N-terminal signal peptide occupies residues 1–23; the sequence is MKSVFTISASLAISLMLCCTAQA.

The protein belongs to the UPF0412 family.

In Escherichia coli (strain K12), this protein is UPF0412 protein YaaI.